The following is a 475-amino-acid chain: Erythroid membrane-associated protein (475 aa).

The first 29 residues, 1 to 29 (MEMASSAGSWLSGCLIPLVFLRLSVHVSG), serve as a signal peptide directing secretion. Residues 30–140 (HAGDAGKFHV…GNLSKEDTVI (111 aa)) enclose the Ig-like V-type domain. Residues 30–155 (HAGDAGKFHV…PSVGSLSPSA (126 aa)) lie on the Extracellular side of the membrane. Cys50 and Cys126 are joined by a disulfide. Asn132 is a glycosylation site (N-linked (GlcNAc...) asparagine). Residues 156-176 (VALAVILPVLVLLIMVCLCLI) traverse the membrane as a helical segment. At 177–475 (WKQRRAKEKL…ALQELKAPSF (299 aa)) the chain is on the cytoplasmic side. Positions 220–418 (KLKRAAANSG…LVICSELHKS (199 aa)) constitute a B30.2/SPRY domain. Ser418 is subject to Phosphoserine.

The protein belongs to the immunoglobulin superfamily. BTN/MOG family. Glycosylated. In terms of tissue distribution, expressed in erythroid-enriched bone marrow (at protein level). Highly expressed in bone marrow and to a lower extent in leukocytes, thymus, lymph node and spleen.

It is found in the cell membrane. Its subcellular location is the cytoplasm. In terms of biological role, possible role as a cell-adhesion or receptor molecule of erythroid cells. This Homo sapiens (Human) protein is Erythroid membrane-associated protein (ERMAP).